Here is a 441-residue protein sequence, read N- to C-terminus: S-adenosylmethionine synthase 1 (441 aa).

Glu-9 is a Mg(2+) binding site. His-15 is a binding site for ATP. Glu-43 contributes to the K(+) binding site. Residues Glu-56 and Gln-99 each coordinate L-methionine. ATP is bound by residues Asp-167–Lys-169, Ser-235–Phe-238, Asp-246, Arg-252–Lys-253, Ala-269, Lys-273, and Lys-277. Asp-246 serves as a coordination point for L-methionine. Lys-277 contacts L-methionine.

Belongs to the AdoMet synthase family. Homotetramer. Requires Mn(2+) as cofactor. Mg(2+) is required as a cofactor. It depends on Co(2+) as a cofactor. The cofactor is K(+).

It localises to the cytoplasm. It carries out the reaction L-methionine + ATP + H2O = S-adenosyl-L-methionine + phosphate + diphosphate. Its pathway is amino-acid biosynthesis; S-adenosyl-L-methionine biosynthesis; S-adenosyl-L-methionine from L-methionine: step 1/1. Catalyzes the formation of S-adenosylmethionine from methionine and ATP. The reaction comprises two steps that are both catalyzed by the same enzyme: formation of S-adenosylmethionine (AdoMet) and triphosphate, and subsequent hydrolysis of the triphosphate. This Daucus carota (Wild carrot) protein is S-adenosylmethionine synthase 1 (SAMS1).